The following is a 74-amino-acid chain: MAINSKYQDKQVDEILKDIIEVLEKHKAPVDLSLVVLGNMVTNLLTSSVGANQRTVLAQAFSDALLNSVKTKHH.

Belongs to the UPF0352 family.

The sequence is that of UPF0352 protein MS1910 from Mannheimia succiniciproducens (strain KCTC 0769BP / MBEL55E).